Here is a 620-residue protein sequence, read N- to C-terminus: Glutathione-regulated potassium-efflux system protein KefC (620 aa).

A run of 12 helical transmembrane segments spans residues 4 to 24 (HTLL…PIAV), 26 to 46 (LGLG…PWGL), 54 to 74 (SILH…GLEL), 90 to 110 (GALQ…FLGL), 114 to 134 (VAEL…MQAM), 149 to 169 (FAVL…IPLL), 178 to 198 (LGAF…VVLL), 218 to 238 (VFSA…EEVG), 270 to 290 (GLLL…GTLV), 294 to 314 (LRIL…LWLV), 327 to 347 (WFAV…GAAQ), and 359 to 379 (ALTL…MLLT). The RCK N-terminal domain maps to 399 to 518 (QPRVIVAGFG…AGVAMPERET (120 aa)). Residues 599 to 620 (QGTAEGKHSGEAADEPEVKPSI) are disordered.

It belongs to the monovalent cation:proton antiporter 2 (CPA2) transporter (TC 2.A.37) family. KefC subfamily. As to quaternary structure, homodimer. Interacts with the regulatory subunit KefF.

It is found in the cell inner membrane. Functionally, pore-forming subunit of a potassium efflux system that confers protection against electrophiles. Catalyzes K(+)/H(+) antiport. This is Glutathione-regulated potassium-efflux system protein KefC from Salmonella heidelberg (strain SL476).